Here is an 88-residue protein sequence, read N- to C-terminus: Small ribosomal subunit protein uS15 (88 aa).

Belongs to the universal ribosomal protein uS15 family. As to quaternary structure, part of the 30S ribosomal subunit. Forms a bridge to the 50S subunit in the 70S ribosome, contacting the 23S rRNA.

Functionally, one of the primary rRNA binding proteins, it binds directly to 16S rRNA where it helps nucleate assembly of the platform of the 30S subunit by binding and bridging several RNA helices of the 16S rRNA. Its function is as follows. Forms an intersubunit bridge (bridge B4) with the 23S rRNA of the 50S subunit in the ribosome. This Geobacter metallireducens (strain ATCC 53774 / DSM 7210 / GS-15) protein is Small ribosomal subunit protein uS15.